The following is a 149-amino-acid chain: Large ribosomal subunit protein bL9 (149 aa).

The protein belongs to the bacterial ribosomal protein bL9 family.

Functionally, binds to the 23S rRNA. This Stenotrophomonas maltophilia (strain K279a) protein is Large ribosomal subunit protein bL9.